The sequence spans 276 residues: 2-dehydro-3-deoxyphosphooctonate aldolase (276 aa).

It belongs to the KdsA family.

Its subcellular location is the cytoplasm. The enzyme catalyses D-arabinose 5-phosphate + phosphoenolpyruvate + H2O = 3-deoxy-alpha-D-manno-2-octulosonate-8-phosphate + phosphate. It functions in the pathway carbohydrate biosynthesis; 3-deoxy-D-manno-octulosonate biosynthesis; 3-deoxy-D-manno-octulosonate from D-ribulose 5-phosphate: step 2/3. The protein operates within bacterial outer membrane biogenesis; lipopolysaccharide biosynthesis. The chain is 2-dehydro-3-deoxyphosphooctonate aldolase from Stenotrophomonas maltophilia (strain R551-3).